A 191-amino-acid polypeptide reads, in one-letter code: Potassium-transporting ATPase KdpC subunit (191 aa).

A helical membrane pass occupies residues 13–35; it reads VLFTGLCGLAYPLAITGVAQAVL. Positions 112 to 132 are disordered; it reads SGPVPADAVTSSASGLDPDIS.

The protein belongs to the KdpC family. As to quaternary structure, the system is composed of three essential subunits: KdpA, KdpB and KdpC.

It localises to the cell inner membrane. Part of the high-affinity ATP-driven potassium transport (or Kdp) system, which catalyzes the hydrolysis of ATP coupled with the electrogenic transport of potassium into the cytoplasm. This subunit acts as a catalytic chaperone that increases the ATP-binding affinity of the ATP-hydrolyzing subunit KdpB by the formation of a transient KdpB/KdpC/ATP ternary complex. This is Potassium-transporting ATPase KdpC subunit from Allorhizobium ampelinum (strain ATCC BAA-846 / DSM 112012 / S4) (Agrobacterium vitis (strain S4)).